We begin with the raw amino-acid sequence, 1987 residues long: Transcriptional activator DEMETER (1987 aa).

Disordered regions lie at residues 246-378 (TGHE…NKSP), 392-415 (DLEN…SSGA), and 793-901 (MPPE…GPSG). The segment covering 258–277 (SMQSIMDSSAVNATEATEQN) has biased composition (polar residues). Over residues 341 to 364 (ATQEKVKSKETGSAKKKNLKESAT) the composition is skewed to basic and acidic residues. Residues 813 to 829 (NTASISKGASKGNSSPV) are compositionally biased toward polar residues. Basic residues predominate over residues 844–855 (PAKKGRAGRKKS). The segment at 955–1054 (KVDIDDETTR…AFMSLAARFP (100 aa)) is DEMETER. Disordered regions lie at residues 1324 to 1351 (LPGM…QDEM) and 1439 to 1471 (TLAD…KNNM). 2 stretches are compositionally biased toward basic and acidic residues: residues 1338–1351 (EHQD…QDEM) and 1452–1469 (SLRK…RNKN). Cys-1629, Cys-1636, Cys-1639, and Cys-1645 together coordinate [4Fe-4S] cluster.

It belongs to the DNA glycosylase family. DEMETER subfamily. Requires [4Fe-4S] cluster as cofactor. In terms of tissue distribution, mainly expressed in immature flower buds, then decreases as the flower matures. Expressed in the ovule carpels, but not expressed in pollen stamens. Expressed in developing and mature ovules (stages 12-14), then strongly decreases after fertilization.

It is found in the nucleus. Functionally, transcriptional activator involved in gene imprinting. Catalyzes the release of 5-methylcytosine (5-meC) from DNA by a glycosylase/lyase mechanism. Allows the expression of the maternal copy of the imprinted MEA gene before fertilization, possibly by antagonizing or suppressing DNA methylation on target promoter. Probably acts by nicking the MEA promoter. Required for stable reproducible patterns of floral and vegetative development. The protein is Transcriptional activator DEMETER (DME) of Arabidopsis thaliana (Mouse-ear cress).